Reading from the N-terminus, the 624-residue chain is tRNA uridine 5-carboxymethylaminomethyl modification enzyme MnmG (624 aa).

FAD is bound by residues 13-18 (GGGHAG), Val125, and Ser180. 273–287 (GPRYCPSIEDKIVRF) is a binding site for NAD(+). Gln370 provides a ligand contact to FAD.

Belongs to the MnmG family. As to quaternary structure, homodimer. Heterotetramer of two MnmE and two MnmG subunits. It depends on FAD as a cofactor.

The protein resides in the cytoplasm. Functionally, NAD-binding protein involved in the addition of a carboxymethylaminomethyl (cmnm) group at the wobble position (U34) of certain tRNAs, forming tRNA-cmnm(5)s(2)U34. The sequence is that of tRNA uridine 5-carboxymethylaminomethyl modification enzyme MnmG from Legionella pneumophila (strain Lens).